Here is a 514-residue protein sequence, read N- to C-terminus: Carboxysome shell carbonic anhydrase (514 aa).

Positions 1–144 (MNTRNTRSKQ…LTAATEQFSR (144 aa)) are N-terminal domain. The tract at residues 151-397 (DDSASAIGFF…GRYPPNDIGH (247 aa)) is catalytic domain. Zn(2+) is bound at residue Cys173. The active-site Proton acceptor is the Asp175. 2 residues coordinate Zn(2+): His242 and Cys253. A C-terminal domain region spans residues 398–514 (AERYISVGDG…GSPIEEVASA (117 aa)).

Belongs to the beta-class carbonic anhydrase family. CsoSCA subfamily. In terms of assembly, homodimer, may form filaments. It depends on Zn(2+) as a cofactor.

The protein resides in the carboxysome. It carries out the reaction hydrogencarbonate + H(+) = CO2 + H2O. Carbonic anhydrase activity is inhibited by ethoxyzolamide, dithiothreitol, cyanide, and divalent metal chelators dipicolinic acid and nitrilotriacetic acid. In terms of biological role, reversible hydration of carbon dioxide. Essential for chemolithotrophic carbon dioxide fixation, supplies CO(2) to RuBisCO (ribulose bisphosphate carboxylase, cbbL-cbbS) in the carboxysome. There are estimated to be 40 CsoSCA dimers per carboxysome. Its function is as follows. Unlike beta-carboxysomes, alpha-carboxysomes (Cb) can form without cargo protein. CsoS2 is essential for Cb formation and is also capable of targeting foreign proteins to the Cb. The Cb shell assembles with the aid of CsoS2; CsoS1A, CsoS1B and CsoS1C form the majority of the shell while CsoS4A and CsoS4B form vertices. CsoS1D forms pseudohexamers that probably control metabolite flux into and out of the shell. The sequence is that of Carboxysome shell carbonic anhydrase from Halothiobacillus neapolitanus (strain ATCC 23641 / c2) (Thiobacillus neapolitanus).